We begin with the raw amino-acid sequence, 529 residues long: Bifunctional purine biosynthesis protein PurH (529 aa).

In terms of domain architecture, MGS-like spans 1 to 148 (MQQRRSVRRA…KNHKDVAIVV (148 aa)).

Belongs to the PurH family.

The catalysed reaction is (6R)-10-formyltetrahydrofolate + 5-amino-1-(5-phospho-beta-D-ribosyl)imidazole-4-carboxamide = 5-formamido-1-(5-phospho-D-ribosyl)imidazole-4-carboxamide + (6S)-5,6,7,8-tetrahydrofolate. It carries out the reaction IMP + H2O = 5-formamido-1-(5-phospho-D-ribosyl)imidazole-4-carboxamide. Its pathway is purine metabolism; IMP biosynthesis via de novo pathway; 5-formamido-1-(5-phospho-D-ribosyl)imidazole-4-carboxamide from 5-amino-1-(5-phospho-D-ribosyl)imidazole-4-carboxamide (10-formyl THF route): step 1/1. It functions in the pathway purine metabolism; IMP biosynthesis via de novo pathway; IMP from 5-formamido-1-(5-phospho-D-ribosyl)imidazole-4-carboxamide: step 1/1. In Salmonella arizonae (strain ATCC BAA-731 / CDC346-86 / RSK2980), this protein is Bifunctional purine biosynthesis protein PurH.